We begin with the raw amino-acid sequence, 31 residues long: Cytochrome b6-f complex subunit 6 (31 aa).

The chain crosses the membrane as a helical span at residues 3 to 23 (VAIDYFLLVGFCFAVTSGLWI).

Belongs to the PetL family. In terms of assembly, the 4 large subunits of the cytochrome b6-f complex are cytochrome b6, subunit IV (17 kDa polypeptide, PetD), cytochrome f and the Rieske protein, while the 4 small subunits are PetG, PetL, PetM and PetN. The complex functions as a dimer.

Its subcellular location is the plastid. It localises to the chloroplast thylakoid membrane. Functionally, component of the cytochrome b6-f complex, which mediates electron transfer between photosystem II (PSII) and photosystem I (PSI), cyclic electron flow around PSI, and state transitions. PetL is important for photoautotrophic growth as well as for electron transfer efficiency and stability of the cytochrome b6-f complex. The polypeptide is Cytochrome b6-f complex subunit 6 (Phaeodactylum tricornutum (strain CCAP 1055/1)).